We begin with the raw amino-acid sequence, 1015 residues long: DNA polymerase catalytic subunit (1015 aa).

It belongs to the DNA polymerase type-B family. In terms of assembly, forms a complex with the ssDNA-binding protein BALF2, the DNA polymerase processivity factor BMRF1, and the alkaline exonuclease BGLF5. Interacts with the putative helicase-primase complex composed of BBLF4, BSLF1 and BBLF2/3 proteins; these interactions may coordinate leading and lagging strand DNA synthesis at the replication fork.

Its subcellular location is the host nucleus. It catalyses the reaction DNA(n) + a 2'-deoxyribonucleoside 5'-triphosphate = DNA(n+1) + diphosphate. In terms of biological role, replicates viral genomic DNA in the late phase of lytic infection, producing long concatemeric DNA. The replication complex is composed of six viral proteins: the DNA polymerase, processivity factor, primase, primase-associated factor, helicase, and ssDNA-binding protein. This chain is DNA polymerase catalytic subunit, found in Epstein-Barr virus (strain B95-8) (HHV-4).